The following is a 453-amino-acid chain: Tubulin gamma chain (453 aa).

142–148 (AGGTGSG) is a binding site for GTP.

It belongs to the tubulin family.

The protein resides in the cytoplasm. It is found in the cytoskeleton. Its subcellular location is the microtubule organizing center. It localises to the spindle pole body. Tubulin is the major constituent of microtubules. The gamma chain is found at microtubule organizing centers (MTOC) such as the spindle poles or the centrosome, suggesting that it is involved in the minus-end nucleation of microtubule assembly. The protein is Tubulin gamma chain (TUB4) of Coprinopsis cinerea (strain Okayama-7 / 130 / ATCC MYA-4618 / FGSC 9003) (Inky cap fungus).